The primary structure comprises 240 residues: Uridylate kinase (240 aa).

13 to 16 serves as a coordination point for ATP; the sequence is KFSG. Glycine 55 lines the UMP pocket. Glycine 56 and arginine 60 together coordinate ATP. Residues aspartate 76 and 137-144 contribute to the UMP site; that span reads TGNPFFTT. Threonine 164, tyrosine 170, and aspartate 173 together coordinate ATP.

This sequence belongs to the UMP kinase family. In terms of assembly, homohexamer.

Its subcellular location is the cytoplasm. It catalyses the reaction UMP + ATP = UDP + ADP. It participates in pyrimidine metabolism; CTP biosynthesis via de novo pathway; UDP from UMP (UMPK route): step 1/1. With respect to regulation, inhibited by UTP. Functionally, catalyzes the reversible phosphorylation of UMP to UDP. This chain is Uridylate kinase, found in Helicobacter pylori (strain ATCC 700392 / 26695) (Campylobacter pylori).